Here is a 411-residue protein sequence, read N- to C-terminus: Peptidase T (411 aa).

His79 lines the Zn(2+) pocket. The active site involves Asp81. Asp142 lines the Zn(2+) pocket. Glu176 (proton acceptor) is an active-site residue. The Zn(2+) site is built by Glu177, Asp199, and His381.

The protein belongs to the peptidase M20B family. The cofactor is Zn(2+).

The protein localises to the cytoplasm. It catalyses the reaction Release of the N-terminal residue from a tripeptide.. Cleaves the N-terminal amino acid of tripeptides. This is Peptidase T from Exiguobacterium sibiricum (strain DSM 17290 / CCUG 55495 / CIP 109462 / JCM 13490 / 255-15).